Here is a 170-residue protein sequence, read N- to C-terminus: Peptide deformylase (170 aa).

Fe cation-binding residues include Cys-94 and His-136. Glu-137 is a catalytic residue. His-140 is a binding site for Fe cation.

It belongs to the polypeptide deformylase family. Fe(2+) is required as a cofactor.

The enzyme catalyses N-terminal N-formyl-L-methionyl-[peptide] + H2O = N-terminal L-methionyl-[peptide] + formate. Removes the formyl group from the N-terminal Met of newly synthesized proteins. Requires at least a dipeptide for an efficient rate of reaction. N-terminal L-methionine is a prerequisite for activity but the enzyme has broad specificity at other positions. This chain is Peptide deformylase, found in Stenotrophomonas maltophilia (strain R551-3).